Here is a 621-residue protein sequence, read N- to C-terminus: Kelch-like protein 40 (621 aa).

In terms of domain architecture, BTB spans 33–98 (LDCVVRAGER…LYTSEIALDE (66 aa)). Positions 133–239 (CLAVFRLGLL…PRAFLESRVE (107 aa)) constitute a BACK domain. The segment at 265 to 295 (ITTLRKKKKGKDGAGAKEADKGTSKAKAEED) is disordered. Positions 275-292 (KDGAGAKEADKGTSKAKA) are enriched in basic and acidic residues. Kelch repeat units follow at residues 360 to 412 (QVFV…EALN), 413 to 462 (SIYV…SHMD), 463 to 510 (LVYV…VHDG), 512 to 557 (IIVA…SLVG), and 559 to 613 (LYAI…PVRL).

It belongs to the KLHL40 family. As to quaternary structure, component of the BCR(KLHL40) E3 ubiquitin ligase complex, at least composed of CUL3, KLHL40 and RBX1. Interacts with LMOD3. Highly expressed in fetal (19, 23 and 31 weeks of gestation) and adult skeletal muscle; expression levels tend to be higher in fetal compared to postnatal muscles (at protein level). Also expressed in fetal and adult heart.

The protein localises to the cytoplasm. Its subcellular location is the myofibril. The protein resides in the sarcomere. It localises to the a band. It is found in the i band. In terms of biological role, substrate-specific adapter of a BCR (BTB-CUL3-RBX1) E3 ubiquitin ligase complex that acts as a key regulator of skeletal muscle development. The BCR(KLHL40) complex acts by mediating ubiquitination and degradation of TFDP1, thereby regulating the activity of the E2F:DP transcription factor complex. Promotes stabilization of LMOD3 by acting as a negative regulator of LMOD3 ubiquitination; the molecular process by which it negatively regulates ubiquitination of LMOD3 is however unclear. The chain is Kelch-like protein 40 from Homo sapiens (Human).